A 385-amino-acid chain; its full sequence is Cytochrome b (385 aa).

4 helical membrane-spanning segments follow: residues 32–52 (FGSL…TLAM), 76–98 (WFIR…AHMG), 113–133 (PWSI…MGYV), and 179–199 (FFAL…LHLI). The heme b site is built by histidine 82 and histidine 96. Residues histidine 183 and histidine 197 each coordinate heme b. Histidine 202 serves as a coordination point for a ubiquinone. Helical transmembrane passes span 225-245 (YSFK…LFVF), 289-309 (LGGV…PIVD), 321-341 (ISKL…VLGQ), and 348-368 (FIVL…ILLP).

It belongs to the cytochrome b family. As to quaternary structure, fungal cytochrome b-c1 complex contains 10 subunits; 3 respiratory subunits, 2 core proteins and 5 low-molecular weight proteins. Cytochrome b-c1 complex is a homodimer. Heme b serves as cofactor.

It localises to the mitochondrion inner membrane. Its function is as follows. Component of the ubiquinol-cytochrome c reductase complex (complex III or cytochrome b-c1 complex) that is part of the mitochondrial respiratory chain. The b-c1 complex mediates electron transfer from ubiquinol to cytochrome c. Contributes to the generation of a proton gradient across the mitochondrial membrane that is then used for ATP synthesis. This Yarrowia lipolytica (strain CLIB 122 / E 150) (Yeast) protein is Cytochrome b (COB).